We begin with the raw amino-acid sequence, 28 residues long: Cruzioseptin-4 (28 aa).

Glu-25 carries the glutamic acid 1-amide modification. The propeptide occupies 27–28 (EH).

As to expression, expressed by the skin glands.

The protein resides in the secreted. Has antimicrobial activity. The sequence is that of Cruzioseptin-4 from Cruziohyla calcarifer (Splendid leaf frog).